A 78-amino-acid polypeptide reads, in one-letter code: MSTIEESVKSIIAEQLGVKKEEVTNNASFVDDLGADSLDTVELVMALEEEFDTEIPDEEAEKITTVQAAIDFIKESKK.

In terms of domain architecture, Carrier spans 2–77; that stretch reads STIEESVKSI…AAIDFIKESK (76 aa). Serine 37 carries the O-(pantetheine 4'-phosphoryl)serine modification.

This sequence belongs to the acyl carrier protein (ACP) family. In terms of processing, 4'-phosphopantetheine is transferred from CoA to a specific serine of apo-ACP by AcpS. This modification is essential for activity because fatty acids are bound in thioester linkage to the sulfhydryl of the prosthetic group.

The protein resides in the cytoplasm. The protein operates within lipid metabolism; fatty acid biosynthesis. Carrier of the growing fatty acid chain in fatty acid biosynthesis. The chain is Acyl carrier protein from Wigglesworthia glossinidia brevipalpis.